Here is a 76-residue protein sequence, read N- to C-terminus: Spermatid nuclear transition protein 3 (76 aa).

Over residues 1–11 the composition is skewed to polar residues; it reads AKVTEKSWQPQ. Disordered stretches follow at residues 1-34 and 56-76; these read AKVT…GKVR and VITT…ETIP. Basic residues predominate over residues 16-34; it reads KRWKKRKTPSQPRSRGKVR.

It is found in the nucleus. It localises to the chromosome. Functionally, involved in nuclear basic protein transition: histones are replaced by spermatid specific proteins which are themselves replaced by protamines in late spermatids. The protein is Spermatid nuclear transition protein 3 (TNP3) of Sus scrofa (Pig).